The following is a 139-amino-acid chain: Protocatechuate 4,5-dioxygenase alpha chain (139 aa).

As to quaternary structure, composed of two subunits (alpha and beta) in a 1:1 ratio. The cofactor is Fe(2+).

It catalyses the reaction 3,4-dihydroxybenzoate + O2 = 4-carboxy-2-hydroxy-cis,cis-muconate 6-semialdehyde + H(+). Its function is as follows. Responsible for the aromatic ring fission of protocatechuate. The sequence is that of Protocatechuate 4,5-dioxygenase alpha chain (ligA) from Sphingobium sp. (strain NBRC 103272 / SYK-6).